The chain runs to 494 residues: UPF0164 protein TP_0859/TP_0860 (494 aa).

Positions 1–44 are cleaved as a signal peptide; the sequence is MVRRPCVSAAPVRVGGRLVFGFARVGSRGLCLGALLLSPRIVLA.

The protein belongs to the UPF0164 family.

The protein is UPF0164 protein TP_0859/TP_0860 of Treponema pallidum (strain Nichols).